An 87-amino-acid polypeptide reads, in one-letter code: Small ribosomal subunit protein uS15c (87 aa).

It belongs to the universal ribosomal protein uS15 family. As to quaternary structure, part of the 30S ribosomal subunit.

The protein localises to the plastid. It is found in the chloroplast. This Oenothera biennis (German evening primrose) protein is Small ribosomal subunit protein uS15c (rps15).